Consider the following 630-residue polypeptide: uncharacterized protein (630 aa).

Transmembrane regions (helical) follow at residues 8–28 (LFNMFRLLAAILVFTGLASAV) and 258–278 (VDNSFLYTFAPYVFSSAPLVI). The segment at 399–426 (EETSKPTEQPSPADSTSTPAAPEKGAAS) is disordered. A compositionally biased stretch (polar residues) spans 404–417 (PTEQPSPADSTSTP).

The protein belongs to the peptidase S1C family.

It is found in the cell membrane. This is an uncharacterized protein from Sinorhizobium fredii (strain NBRC 101917 / NGR234).